Consider the following 404-residue polypeptide: Caspase-1 (404 aa).

The region spanning 1 to 91 (MADKVLKEKR…YLAGTLGLSA (91 aa)) is the CARD domain. Positions 1–119 (MADKVLKEKR…SFPAPQAVQD (119 aa)) are excised as a propeptide. Lysine 134 participates in a covalent cross-link: Glycyl lysine isopeptide (Lys-Gly) (interchain with G-Cter in ubiquitin). Residues histidine 237 and cysteine 285 contribute to the active site. The propeptide at 298 to 316 (SVGVSGNLSLPTTEEFEDD) is interdomain linker. Serine 302 carries the phosphoserine modification.

The protein belongs to the peptidase C14A family. As to quaternary structure, heterotetramer that consists of two anti-parallel arranged heterodimers, each one formed by a 20 kDa (Caspase-1 subunit p20) and a 10 kDa (Caspase-1 subunit p10) subunit. May be a component of the inflammasome, a protein complex which also includes PYCARD, CARD8 and NLRP2 and whose function would be the activation of pro-inflammatory caspases. Component of the AIM2 PANoptosome complex, a multiprotein complex that drives inflammatory cell death (PANoptosis). Interacts with CARD8; interacts with the released C-terminus of CARD8 which forms an inflammasome and directly activates CASP1 to promote pyroptosis. Both the p10 and p20 subunits interact with MEFV. Interacts with CARD17P/INCA and CARD18. Interacts with SERPINB1; this interaction regulates CASP1 activity. Heterotetramer that consists of two anti-parallel arranged heterodimers, each one formed by a 20 kDa (Caspase-1 subunit p20) and a 10 kDa (Caspase-1 subunit p10) subunit. Can form a heterodimer with isoform epsilon which then has an inhibitory effect. In terms of assembly, heterotetramer that consists of two anti-parallel arranged heterodimers, each one formed by a 20 kDa (Caspase-1 subunit p20) and a 10 kDa (Caspase-1 subunit p10) subunit. As to quaternary structure, can form a heterodimer with Caspase-1 subunit p20 which then has an inhibitory effect. The two subunits are derived from the precursor sequence by an autocatalytic mechanism. Post-translationally, ubiquitinated via 'Lys-11'-linked polyubiquitination. Deubiquitinated by USP8. In terms of processing, cleavage in the interdomain linker region is required to induce pyroptosis. As to expression, expressed in larger amounts in spleen and lung. Detected in liver, heart, small intestine, colon, thymus, prostate, skeletal muscle, peripheral blood leukocytes, kidney and testis. No expression in the brain.

It is found in the cytoplasm. Its subcellular location is the cell membrane. The enzyme catalyses Strict requirement for an Asp residue at position P1 and has a preferred cleavage sequence of Tyr-Val-Ala-Asp-|-.. With respect to regulation, (Microbial infection) Specifically inhibited by the cowpox virus Crma protein. Functionally, thiol protease involved in a variety of inflammatory processes by proteolytically cleaving other proteins, such as the precursors of the inflammatory cytokines interleukin-1 beta (IL1B) and interleukin 18 (IL18) as well as the pyroptosis inducer Gasdermin-D (GSDMD), into active mature peptides. Plays a key role in cell immunity as an inflammatory response initiator: once activated through formation of an inflammasome complex, it initiates a pro-inflammatory response through the cleavage of the two inflammatory cytokines IL1B and IL18, releasing the mature cytokines which are involved in a variety of inflammatory processes. Cleaves a tetrapeptide after an Asp residue at position P1. Also initiates pyroptosis, a programmed lytic cell death pathway, through cleavage of GSDMD. In contrast to cleavage of interleukin IL1B, recognition and cleavage of GSDMD is not strictly dependent on the consensus cleavage site but depends on an exosite interface on CASP1 that recognizes and binds the Gasdermin-D, C-terminal (GSDMD-CT) part. Cleaves and activates CASP7 in response to bacterial infection, promoting plasma membrane repair. Upon inflammasome activation, during DNA virus infection but not RNA virus challenge, controls antiviral immunity through the cleavage of CGAS, rendering it inactive. In apoptotic cells, cleaves SPHK2 which is released from cells and remains enzymatically active extracellularly. Its function is as follows. Apoptosis inactive. This chain is Caspase-1 (CASP1), found in Homo sapiens (Human).